The primary structure comprises 169 residues: Small ribosomal subunit protein uS5 (169 aa).

One can recognise an S5 DRBM domain in the interval 14 to 77 (LQEKVVEVRR…EDAKKNLIVV (64 aa)).

The protein belongs to the universal ribosomal protein uS5 family. Part of the 30S ribosomal subunit. Contacts proteins S4 and S8.

In terms of biological role, with S4 and S12 plays an important role in translational accuracy. Its function is as follows. Located at the back of the 30S subunit body where it stabilizes the conformation of the head with respect to the body. The polypeptide is Small ribosomal subunit protein uS5 (Clostridioides difficile (strain 630) (Peptoclostridium difficile)).